We begin with the raw amino-acid sequence, 387 residues long: Alkanesulfonate monooxygenase (387 aa).

It belongs to the SsuD family.

The enzyme catalyses an alkanesulfonate + FMNH2 + O2 = an aldehyde + FMN + sulfite + H2O + 2 H(+). Catalyzes the desulfonation of aliphatic sulfonates. This is Alkanesulfonate monooxygenase from Cupriavidus pinatubonensis (strain JMP 134 / LMG 1197) (Cupriavidus necator (strain JMP 134)).